The primary structure comprises 232 residues: Aspartate/glutamate leucyltransferase (232 aa).

This sequence belongs to the R-transferase family. Bpt subfamily.

Its subcellular location is the cytoplasm. The enzyme catalyses N-terminal L-glutamyl-[protein] + L-leucyl-tRNA(Leu) = N-terminal L-leucyl-L-glutamyl-[protein] + tRNA(Leu) + H(+). It catalyses the reaction N-terminal L-aspartyl-[protein] + L-leucyl-tRNA(Leu) = N-terminal L-leucyl-L-aspartyl-[protein] + tRNA(Leu) + H(+). In terms of biological role, functions in the N-end rule pathway of protein degradation where it conjugates Leu from its aminoacyl-tRNA to the N-termini of proteins containing an N-terminal aspartate or glutamate. The protein is Aspartate/glutamate leucyltransferase of Vibrio vulnificus (strain YJ016).